We begin with the raw amino-acid sequence, 619 residues long: Genetic interactor of prohibitins 3, mitochondrial (619 aa).

The transit peptide at Met1–Pro55 directs the protein to the mitochondrion. The region spanning Val162 to Ala372 is the CP-type G domain.

It belongs to the TRAFAC class YlqF/YawG GTPase family. GEP3 subfamily.

The protein resides in the mitochondrion. In terms of biological role, may be involved in the mitochondrial lipid metabolism. This is Genetic interactor of prohibitins 3, mitochondrial (GEP3) from Clavispora lusitaniae (strain ATCC 42720) (Yeast).